We begin with the raw amino-acid sequence, 30 residues long: Dicynthaurin (30 aa).

T30 carries the post-translational modification Threonine amide.

Homodimer.

It is found in the secreted. Its function is as follows. Shows antibacterial activity against both Gram-positive and Gram-negative bacteria. Its antimicrobial activity is optimal at NaCl concentrations below 100 mM, suggesting that the antimicrobial actions of this peptide may take place intracellularly rather than extracellularly. Has no activity against the fungus C.albicans. Has modest hemolytic activity. The chain is Dicynthaurin from Halocynthia aurantium (Sea peach).